The primary structure comprises 306 residues: Homeobox protein CUP9 (306 aa).

The disordered stretch occupies residues 75-123 (PAINSGGTSTTATPTASTVETSKTSSSAMDTQSQYGSSKKSKSASDDAK). The span at 79 to 96 (SGGTSTTATPTASTVETS) shows a compositional bias: low complexity. Positions 97–110 (KTSSSAMDTQSQYG) are enriched in polar residues. Residues 162–224 (NSGRRSNLPK…NVRRRKIFSD (63 aa)) constitute a DNA-binding region (homeobox; TALE-type).

Belongs to the TALE/CUP9 homeobox family.

The protein resides in the nucleus. In terms of biological role, probable DNA-binding protein which plays a role in protecting yeast cells against copper toxicity. May regulate the expression of important copper homeostatic genes. This Saccharomyces cerevisiae (strain ATCC 204508 / S288c) (Baker's yeast) protein is Homeobox protein CUP9 (CUP9).